Consider the following 328-residue polypeptide: Ketol-acid reductoisomerase (NADP(+)) (328 aa).

The KARI N-terminal Rossmann domain maps to 2 to 181 (AKIYRETDAD…GFTRVGVIET (180 aa)). Residues 25–28 (YGIQ), Arg48, Ser52, and 82–85 (DMVQ) contribute to the NADP(+) site. Residue His107 is part of the active site. Residue Gly133 coordinates NADP(+). Residues 182-327 (TFAEETETDL…EDLRRLMRSG (146 aa)) form the KARI C-terminal knotted domain. Mg(2+) contacts are provided by Asp190, Glu194, Glu226, and Glu230. Residue Ser251 participates in substrate binding.

This sequence belongs to the ketol-acid reductoisomerase family. Mg(2+) is required as a cofactor.

It catalyses the reaction (2R)-2,3-dihydroxy-3-methylbutanoate + NADP(+) = (2S)-2-acetolactate + NADPH + H(+). The catalysed reaction is (2R,3R)-2,3-dihydroxy-3-methylpentanoate + NADP(+) = (S)-2-ethyl-2-hydroxy-3-oxobutanoate + NADPH + H(+). It participates in amino-acid biosynthesis; L-isoleucine biosynthesis; L-isoleucine from 2-oxobutanoate: step 2/4. The protein operates within amino-acid biosynthesis; L-valine biosynthesis; L-valine from pyruvate: step 2/4. Functionally, involved in the biosynthesis of branched-chain amino acids (BCAA). Catalyzes an alkyl-migration followed by a ketol-acid reduction of (S)-2-acetolactate (S2AL) to yield (R)-2,3-dihydroxy-isovalerate. In the isomerase reaction, S2AL is rearranged via a Mg-dependent methyl migration to produce 3-hydroxy-3-methyl-2-ketobutyrate (HMKB). In the reductase reaction, this 2-ketoacid undergoes a metal-dependent reduction by NADPH to yield (R)-2,3-dihydroxy-isovalerate. The polypeptide is Ketol-acid reductoisomerase (NADP(+)) (Caldivirga maquilingensis (strain ATCC 700844 / DSM 13496 / JCM 10307 / IC-167)).